We begin with the raw amino-acid sequence, 234 residues long: Probable transcriptional regulatory protein Psyr_3028 (234 aa).

Belongs to the TACO1 family.

The protein localises to the cytoplasm. The polypeptide is Probable transcriptional regulatory protein Psyr_3028 (Pseudomonas syringae pv. syringae (strain B728a)).